Consider the following 82-residue polypeptide: Conotoxin Gla-TxX (82 aa).

The N-terminal stretch at 1–25 is a signal peptide; sequence MSGHTSVSFLLLSIVALGMVATVIC. A 4-carboxyglutamate mark is found at Glu-30, Glu-34, Glu-37, Glu-40, and Glu-41. At Asn-72 the chain carries Asparagine amide. The propeptide occupies 77 to 82; sequence LIHMQK.

Post-translationally, contains 4 disulfide bonds. In terms of tissue distribution, expressed by the venom duct.

It is found in the secreted. The chain is Conotoxin Gla-TxX from Conus textile (Cloth-of-gold cone).